The primary structure comprises 296 residues: Probable ribosomal RNA small subunit methyltransferase A (296 aa).

Polar residues predominate over residues 1 to 16 (MTDATSGSDPDSTTPV). The tract at residues 1–25 (MTDATSGSDPDSTTPVDLTGEDFRD) is disordered. Residues histidine 44, leucine 46, glycine 72, glutamate 93, aspartate 121, and asparagine 136 each coordinate S-adenosyl-L-methionine.

This sequence belongs to the class I-like SAM-binding methyltransferase superfamily. rRNA adenine N(6)-methyltransferase family. RsmA subfamily.

The protein localises to the cytoplasm. Functionally, specifically dimethylates two adjacent adenosines in the loop of a conserved hairpin near the 3'-end of 16S rRNA in the 30S particle. May play a critical role in biogenesis of 30S subunits. The polypeptide is Probable ribosomal RNA small subunit methyltransferase A (Haloquadratum walsbyi (strain DSM 16790 / HBSQ001)).